A 179-amino-acid polypeptide reads, in one-letter code: Large ribosomal subunit protein uL5 (179 aa).

It belongs to the universal ribosomal protein uL5 family. Part of the 50S ribosomal subunit; part of the 5S rRNA/L5/L18/L25 subcomplex. Contacts the 5S rRNA and the P site tRNA. Forms a bridge to the 30S subunit in the 70S ribosome.

Functionally, this is one of the proteins that bind and probably mediate the attachment of the 5S RNA into the large ribosomal subunit, where it forms part of the central protuberance. In the 70S ribosome it contacts protein S13 of the 30S subunit (bridge B1b), connecting the 2 subunits; this bridge is implicated in subunit movement. Contacts the P site tRNA; the 5S rRNA and some of its associated proteins might help stabilize positioning of ribosome-bound tRNAs. The polypeptide is Large ribosomal subunit protein uL5 (Chromohalobacter salexigens (strain ATCC BAA-138 / DSM 3043 / CIP 106854 / NCIMB 13768 / 1H11)).